The sequence spans 281 residues: Ribosomal RNA small subunit methyltransferase A (281 aa).

Positions 35, 37, 62, 83, 107, and 125 each coordinate S-adenosyl-L-methionine.

It belongs to the class I-like SAM-binding methyltransferase superfamily. rRNA adenine N(6)-methyltransferase family. RsmA subfamily.

The protein localises to the cytoplasm. It carries out the reaction adenosine(1518)/adenosine(1519) in 16S rRNA + 4 S-adenosyl-L-methionine = N(6)-dimethyladenosine(1518)/N(6)-dimethyladenosine(1519) in 16S rRNA + 4 S-adenosyl-L-homocysteine + 4 H(+). Its function is as follows. Specifically dimethylates two adjacent adenosines (A1518 and A1519) in the loop of a conserved hairpin near the 3'-end of 16S rRNA in the 30S particle. May play a critical role in biogenesis of 30S subunits. In Deinococcus geothermalis (strain DSM 11300 / CIP 105573 / AG-3a), this protein is Ribosomal RNA small subunit methyltransferase A.